We begin with the raw amino-acid sequence, 370 residues long: MPHQQILMLFGLLPVATNISTWWNFGSMLLACLTLQLLTGFFLAVHYTANINLAFSSIIHITRDVPYGWMMQNLHAIGASMFFICIYIHIARGLYYGSYLNKETWLSGTTLLIMLMATAFFGYVLPWGQMSFWAATVITNLLTAIPYLGSTMTTWLWGGFAINDPTLTRFFALHFILPFGIISLSSLHILLLHEEGSSNPLGTNSDIDKIPFHPYQTYKDMLMLTIMTIMLLTIVSFFPDIFNDPDNFSKANPLVTPQHIKPEWYFLFAYGILRSIPNKLGGALALXMSIMILLTLPFTHTSKLRSMMFRPFMQLTFWTFTATFLVISWTATKPVEPPFTTISQVAALMYFLFFISNPIMGWLENKIMKL.

4 helical membrane-spanning segments follow: residues 25–45 (FGSMLLACLTLQLLTGFFLAV), 69–90 (WMMQNLHAIGASMFFICIYIHI), 105–125 (WLSGTTLLIMLMATAFFGYVL), and 170–190 (FFALHFILPFGIISLSSLHIL). Positions 75 and 89 each coordinate heme b. Heme b is bound by residues H174 and H188. H193 provides a ligand contact to a ubiquinone. Helical transmembrane passes span 218–238 (YKDMLMLTIMTIMLLTIVSFF), 280–300 (LGGALALXMSIMILLTLPFTH), 312–332 (FMQLTFWTFTATFLVISWTAT), and 339–358 (FTTISQVAALMYFLFFISNP).

This sequence belongs to the cytochrome b family. In terms of assembly, the cytochrome bc1 complex contains 3 respiratory subunits (MT-CYB, CYC1 and UQCRFS1), 2 core proteins (UQCRC1 and UQCRC2) and probably 6 low-molecular weight proteins. Heme b serves as cofactor.

The protein resides in the mitochondrion inner membrane. Its function is as follows. Component of the ubiquinol-cytochrome c reductase complex (complex III or cytochrome b-c1 complex) that is part of the mitochondrial respiratory chain. The b-c1 complex mediates electron transfer from ubiquinol to cytochrome c. Contributes to the generation of a proton gradient across the mitochondrial membrane that is then used for ATP synthesis. This Chilabothrus exsul (Abaco Island boa) protein is Cytochrome b (MT-CYB).